Consider the following 365-residue polypeptide: 25S rRNA (uridine(2843)-N(3))-methyltransferase (365 aa).

The protein belongs to the class I-like SAM-binding methyltransferase superfamily.

Its subcellular location is the cytoplasm. The protein localises to the nucleus. It carries out the reaction uridine(2843) in 25S rRNA + S-adenosyl-L-methionine = N(3)-methyluridine(2843) in 25S rRNA + S-adenosyl-L-homocysteine + H(+). Its function is as follows. S-adenosyl-L-methionine-dependent methyltransferase that specifically methylates the N(3) position of uridine 2843 (m3U2843) in 25S rRNA. In Saccharomyces cerevisiae (strain ATCC 204508 / S288c) (Baker's yeast), this protein is 25S rRNA (uridine(2843)-N(3))-methyltransferase (BMT6).